The primary structure comprises 263 residues: Cysteine-rich repeat secretory protein 55 (263 aa).

Residues 1 to 20 (MKTLVVKCFLLLALVCSCRA) form the signal peptide. 2 consecutive Gnk2-homologous domains span residues 22 to 126 (DSIW…QENF) and 132 to 240 (TGAG…FYPF).

This sequence belongs to the cysteine-rich repeat secretory protein family.

It is found in the secreted. The polypeptide is Cysteine-rich repeat secretory protein 55 (CRRSP55) (Arabidopsis thaliana (Mouse-ear cress)).